The sequence spans 301 residues: uncharacterized protein (301 aa).

It belongs to the asfivirus E301R family. As to quaternary structure, interacts with host IRF3.

In terms of biological role, plays a role in the inhibition of host innate immune system by acting as a negatively regulator of type I interferon production. Mechanistically, interacts with and prevents host IRF3 nuclear localization to inhibit its transcriptional activity. This is an uncharacterized protein from African swine fever virus (isolate Tick/South Africa/Pretoriuskop Pr4/1996) (ASFV).